The primary structure comprises 672 residues: Prion-like-(Q/N-rich) domain-bearing protein 25 (672 aa).

A helical membrane pass occupies residues 26 to 46 (VPPPIMICLFFLLLQIFVISV).

It localises to the membrane. In Caenorhabditis elegans, this protein is Prion-like-(Q/N-rich) domain-bearing protein 25 (pqn-25).